Reading from the N-terminus, the 678-residue chain is uncharacterized protein (678 aa).

Transmembrane regions (helical) follow at residues 14–34 and 180–200; these read LMFA…WTGL and GAVI…IGGF.

This sequence belongs to the mycobacterial PPE family.

It localises to the cell membrane. This is an uncharacterized protein from Mycobacterium tuberculosis (strain ATCC 25618 / H37Rv).